Here is a 358-residue protein sequence, read N- to C-terminus: Carbohydrate sulfotransferase 10 (358 aa).

At 1-6 the chain is on the cytoplasmic side; that stretch reads MHHQWL. Residues 7–27 form a helical; Signal-anchor for type II membrane protein membrane-spanning segment; that stretch reads LLAACFWVIFMFMVASKFITL. Over 28 to 358 the chain is Lumenal; sequence TFKDPDGYGA…GYRVPDFLLN (331 aa). N101 carries an N-linked (GlcNAc...) asparagine glycan. Residues 129-135 and 191-199 contribute to the 3'-phosphoadenylyl sulfate site; these read PKVGNTQ and RDPFERLIS. Residue N318 is glycosylated (N-linked (GlcNAc...) asparagine).

This sequence belongs to the sulfotransferase 2 family. In terms of tissue distribution, predominantly expressed in hypertrophic, prehypertrophic and proliferative chondrocytes at E12 but is down-regulated in epiphyseal chondrocytes.

The protein resides in the golgi apparatus membrane. In terms of biological role, catalyzes the transfer of sulfate to position 3 of terminal glucuronic acid of both protein- and lipid-linked oligosaccharides. Participates in biosynthesis of HNK-1 carbohydrate structure, a sulfated glucuronyl-lactosaminyl residue carried by many neural recognition molecules, which is involved in cell interactions during ontogenetic development and in synaptic plasticity in the adult. The chain is Carbohydrate sulfotransferase 10 (CHST10) from Gallus gallus (Chicken).